Consider the following 181-residue polypeptide: Large ribosomal subunit protein uL6 (181 aa).

This sequence belongs to the universal ribosomal protein uL6 family. In terms of assembly, part of the 50S ribosomal subunit.

Functionally, this protein binds to the 23S rRNA, and is important in its secondary structure. It is located near the subunit interface in the base of the L7/L12 stalk, and near the tRNA binding site of the peptidyltransferase center. This Lawsonia intracellularis (strain PHE/MN1-00) protein is Large ribosomal subunit protein uL6.